The sequence spans 492 residues: Cytoplasmic dynein 1 light intermediate chain 2 (492 aa).

An ATP-binding site is contributed by 61 to 68; the sequence is GEDGSGKT. Disordered regions lie at residues 187–206, 371–423, and 437–492; these read PEEG…SGSD, AKQP…KNNA, and LSKK…ENEA. Position 194 is a phosphoserine (Ser-194). Polar residues predominate over residues 371–381; the sequence is AKQPATPTRAS. A phosphoserine mark is found at Ser-383 and Ser-391. An Omega-N-methylarginine modification is found at Arg-397. Position 441 is a phosphothreonine (Thr-441). Ser-443 and Ser-446 each carry phosphoserine. A compositionally biased stretch (polar residues) spans 452–469; that stretch reads VQSTAKKSGQKTVLSNVQ. The span at 471-480 shows a compositional bias: basic and acidic residues; it reads ELDRMTRKPD. Residues 482–492 are compositionally biased toward polar residues; the sequence is MVTNSSTENEA.

It belongs to the dynein light intermediate chain family. Homodimer. The cytoplasmic dynein 1 complex consists of two catalytic heavy chains (HCs) and a number of non-catalytic subunits presented by intermediate chains (ICs), light intermediate chains (LICs) and light chains (LCs); the composition seems to vary in respect to the IC, LIC and LC composition. The heavy chain homodimer serves as a scaffold for the probable homodimeric assembly of the respective non-catalytic subunits. The ICs and LICs bind directly to the HC dimer and the LCs assemble on the IC dimer. Interacts with DYNC1H1; DYNC1LI1 and DYNC1LI2 bind mutually exclusive to DYNC1H.

It localises to the cytoplasm. It is found in the cytoskeleton. Its function is as follows. Acts as one of several non-catalytic accessory components of the cytoplasmic dynein 1 complex that are thought to be involved in linking dynein to cargos and to adapter proteins that regulate dynein function. Cytoplasmic dynein 1 acts as a motor for the intracellular retrograde motility of vesicles and organelles along microtubules. May play a role in binding dynein to membranous organelles or chromosomes. This chain is Cytoplasmic dynein 1 light intermediate chain 2 (DYNC1LI2), found in Pongo abelii (Sumatran orangutan).